A 742-amino-acid polypeptide reads, in one-letter code: Zinc finger protein 280C (742 aa).

Residues lysine 10, lysine 23, lysine 42, lysine 65, lysine 85, lysine 123, and lysine 135 each participate in a glycyl lysine isopeptide (Lys-Gly) (interchain with G-Cter in SUMO2) cross-link. The segment covering 138-168 (FTKTSPQEDSGACSVSQSDSTQDIPSSNILQ) has biased composition (polar residues). The segment at 138 to 243 (FTKTSPQEDS…QSAPGSSSLR (106 aa)) is disordered. Glycyl lysine isopeptide (Lys-Gly) (interchain with G-Cter in SUMO2) cross-links involve residues lysine 180, lysine 186, and lysine 193. Positions 182-191 (PSTSKVNSVN) are enriched in polar residues. Residues 200–222 (SISETRPCSSSSSQTAPSGASSQ) show a composition bias toward low complexity. Positions 223–243 (TVLSNVNTSSVQSAPGSSSLR) are enriched in polar residues. 5 C2H2-type zinc fingers span residues 323–345 (FKCF…MKHH), 360–383 (TTCQ…ESTH), 390–413 (TICK…KDTH), 420–443 (YICQ…RSSH), and 477–499 (YRCP…KLEH). Residues 523 to 578 (LGSSQSRASSPPSSTIPSTSLQLSVPKSKSTTTKNNSKVSANKATTTSPQTVATTT) show a composition bias toward low complexity. The tract at residues 523–608 (LGSSQSRASS…YKQKRQRTRK (86 aa)) is disordered. Polar residues predominate over residues 579–592 (GKPSASKPGTGTTK). Lysine 580 is covalently cross-linked (Glycyl lysine isopeptide (Lys-Gly) (interchain with G-Cter in SUMO2)). A compositionally biased stretch (basic residues) spans 593-608 (SKAKPSYKQKRQRTRK).

Its subcellular location is the nucleus. May function as a transcription factor. The sequence is that of Zinc finger protein 280C (Znf280c) from Mus musculus (Mouse).